Reading from the N-terminus, the 206-residue chain is MHTHYEEPLWQHYEFICGIDEVGRGPLAGPVVAAAVVFPRWFQPTEALLTLLNDSKKLSAKERESLVPAIKAQALHWALAEVQHNVIDEVNILQATMLAMNNAVKALPIIPSLLLVDGNRFTTDLAIPYKTIVKGDSHVFSIAAASVLAKVHRDALMCVYATHYPHYGFERHAGYPTSAHIEAIRQHGRCPIHRQSFKLRQLGEKV.

The RNase H type-2 domain occupies 14 to 206 (EFICGIDEVG…FKLRQLGEKV (193 aa)). A divalent metal cation is bound by residues aspartate 20, glutamate 21, and aspartate 117.

It belongs to the RNase HII family. Requires Mn(2+) as cofactor. It depends on Mg(2+) as a cofactor.

The protein localises to the cytoplasm. It catalyses the reaction Endonucleolytic cleavage to 5'-phosphomonoester.. Functionally, endonuclease that specifically degrades the RNA of RNA-DNA hybrids. The chain is Ribonuclease HII from Chlorobium chlorochromatii (strain CaD3).